The chain runs to 436 residues: Glutamyl-tRNA reductase (436 aa).

Residues 49 to 52 (TCNR), serine 109, 114 to 116 (EGQ), and glutamine 120 contribute to the substrate site. The Nucleophile role is filled by cysteine 50. 198–203 (GAGRMS) provides a ligand contact to NADP(+).

The protein belongs to the glutamyl-tRNA reductase family. In terms of assembly, homodimer.

The enzyme catalyses (S)-4-amino-5-oxopentanoate + tRNA(Glu) + NADP(+) = L-glutamyl-tRNA(Glu) + NADPH + H(+). It participates in porphyrin-containing compound metabolism; protoporphyrin-IX biosynthesis; 5-aminolevulinate from L-glutamyl-tRNA(Glu): step 1/2. It functions in the pathway porphyrin-containing compound metabolism; chlorophyll biosynthesis. Its function is as follows. Catalyzes the NADPH-dependent reduction of glutamyl-tRNA(Glu) to glutamate 1-semialdehyde (GSA). This Prochlorococcus marinus (strain MIT 9313) protein is Glutamyl-tRNA reductase.